Here is a 285-residue protein sequence, read N- to C-terminus: K88 fimbrial protein AB (285 aa).

The first 21 residues, 1–21 (MKKTLIALAIAASAASGMAHA), serve as a signal peptide directing secretion.

It belongs to the fimbrial K88 protein family. K88 fimbria, 0.1-1 micrometer in length and 7 nanometers in diameter, is composed of about 100 identical subunits.

Its subcellular location is the fimbrium. K88 major fimbrial subunit. Fimbriae (also called pili), are polar filaments radiating from the surface of the bacterium to a length of 0.5-1.5 micrometers and numbering 100-300 per cell. They enable bacteria to colonize the epithelium of specific host organs. This chain is K88 fimbrial protein AB (faeG), found in Escherichia coli.